The following is a 548-amino-acid chain: Chaperonin GroEL (548 aa).

ATP contacts are provided by residues 30–33 (TLGP), K51, 87–91 (DGTTT), G415, 479–481 (NAA), and D495. The segment at 526-548 (KEDKSSDLGSAPAGGMGGMGGMM) is disordered. Residues 537–548 (PAGGMGGMGGMM) are compositionally biased toward gly residues.

This sequence belongs to the chaperonin (HSP60) family. In terms of assembly, forms a cylinder of 14 subunits composed of two heptameric rings stacked back-to-back. Interacts with the co-chaperonin GroES.

It localises to the cytoplasm. The enzyme catalyses ATP + H2O + a folded polypeptide = ADP + phosphate + an unfolded polypeptide.. Its function is as follows. Together with its co-chaperonin GroES, plays an essential role in assisting protein folding. The GroEL-GroES system forms a nano-cage that allows encapsulation of the non-native substrate proteins and provides a physical environment optimized to promote and accelerate protein folding. This Buchnera aphidicola subsp. Pterocomma populeum protein is Chaperonin GroEL.